Here is a 498-residue protein sequence, read N- to C-terminus: Glycerol kinase (498 aa).

Threonine 12 contacts ADP. ATP-binding residues include threonine 12, threonine 13, and serine 14. Threonine 12 is a binding site for sn-glycerol 3-phosphate. An ADP-binding site is contributed by arginine 16. Sn-glycerol 3-phosphate-binding residues include arginine 82, glutamate 83, tyrosine 134, and aspartate 243. 5 residues coordinate glycerol: arginine 82, glutamate 83, tyrosine 134, aspartate 243, and glutamine 244. ADP is bound by residues threonine 265 and glycine 308. ATP is bound by residues threonine 265, glycine 308, glutamine 312, and glycine 409. Glycine 409 and asparagine 413 together coordinate ADP.

Belongs to the FGGY kinase family. Homotetramer and homodimer (in equilibrium).

It carries out the reaction glycerol + ATP = sn-glycerol 3-phosphate + ADP + H(+). It participates in polyol metabolism; glycerol degradation via glycerol kinase pathway; sn-glycerol 3-phosphate from glycerol: step 1/1. With respect to regulation, activated by phosphorylation and inhibited by fructose 1,6-bisphosphate (FBP). Key enzyme in the regulation of glycerol uptake and metabolism. Catalyzes the phosphorylation of glycerol to yield sn-glycerol 3-phosphate. The chain is Glycerol kinase from Clostridium botulinum (strain Loch Maree / Type A3).